The primary structure comprises 279 residues: Non-structural maintenance of chromosomes element 3 homolog (279 aa).

A disordered region spans residues 1 to 52 (MLQKPRGRGRPSTQADPERDWGGAGEEGPSTSRAAGGSSQGSRASLSAPTVG). A compositionally biased stretch (low complexity) spans 30-48 (STSRAAGGSSQGSRASLSA). Ser38 bears the Phosphoserine mark. The segment at 52–279 (GPRTQKQLEL…ATASAPATSS (228 aa)) is interaction with NSMCE1. The 201-residue stretch at 59–259 (LELKVAELVQ…KDWPTQYCEA (201 aa)) folds into the MAGE domain.

As to quaternary structure, component of the SMC5-SMC6 complex which consists at least of SMC5, SMC6, NSMCE2, NSMCE1, NSMCE4A or EID3 and NSMCE3. NSMCE1, NSMCE4A or EID3 and NSMCE3 probably form a subcomplex that bridges the head domains of the SMC5:SMC6 heterodimer. Interacts with PJA1. Interacts with E2F1 (via C-terminus). Interacts with NGFR (via C-terminus). Interacts with NSMCE1. Interacts with NSMCE4. Interacts with SMC6. Interacts with EID3. Ubiquitous.

It localises to the cytoplasm. Its subcellular location is the nucleus. The protein localises to the chromosome. The protein resides in the telomere. Functionally, component of the SMC5-SMC6 complex, a complex involved in repair of DNA double-strand breaks by homologous recombination. The complex may promote sister chromatid homologous recombination by recruiting the SMC1-SMC3 cohesin complex to double-strand breaks. The complex is required for telomere maintenance via recombination in ALT (alternative lengthening of telomeres) cell lines and mediates sumoylation of shelterin complex (telosome) components which is proposed to lead to shelterin complex disassembly in ALT-associated PML bodies (APBs). In vitro enhances ubiquitin ligase activity of NSMCE1. Proposed to act through recruitment and/or stabilization of the Ubl-conjugating enzyme (E2) at the E3:substrate complex. May be a growth suppressor that facilitates the entry of the cell into cell cycle arrest. This chain is Non-structural maintenance of chromosomes element 3 homolog (Nsmce3), found in Mus musculus (Mouse).